We begin with the raw amino-acid sequence, 861 residues long: E3 ubiquitin-protein ligase SH3RF1 (861 aa).

The RING-type zinc-finger motif lies at 12 to 53 (CPVCLERLDASAKVLPCQHTFCKRCLLGIVSSRNELRCPECR). SH3 domains follow at residues 132–191 (PQLP…IIKP) and 194–257 (QPPP…FNSA). The tract at residues 268 to 319 (SGVDTGEGSSGTTHSSNSQKQADAKKNTKKRHSFTSLTMSNKSSQSVQNRHS) is disordered. Low complexity predominate over residues 273–285 (GEGSSGTTHSSNS). Positions 301-317 (FTSLTMSNKSSQSVQNR) are enriched in polar residues. One can recognise an SH3 3 domain in the interval 435–496 (TRPSVFVAIY…PGNYVAPVTR (62 aa)). The tract at residues 684–731 (NSAANKQDKDSKKEKKGLLKLLSGASTKRKPRSSPPHSPTQELEQTNS) is disordered. The span at 689–700 (KQDKDSKKEKKG) shows a compositional bias: basic and acidic residues. An SH3 4 domain is found at 802–861 (RPCERYRVVVSYPPQSEAELELKEGDIVFVHKKREDGWFKGTLQRNGKTGLFPGSFVENI).

It belongs to the SH3RF family. In terms of processing, autoubiquitinated. Ubiquitinated by SH3RF2, leading to proteasome-mediated degradation.

The protein resides in the cytoplasm. Its subcellular location is the perinuclear region. It localises to the cell projection. It is found in the lamellipodium. The protein localises to the golgi apparatus. The protein resides in the trans-Golgi network. It catalyses the reaction S-ubiquitinyl-[E2 ubiquitin-conjugating enzyme]-L-cysteine + [acceptor protein]-L-lysine = [E2 ubiquitin-conjugating enzyme]-L-cysteine + N(6)-ubiquitinyl-[acceptor protein]-L-lysine.. Its pathway is protein modification; protein ubiquitination. In terms of biological role, has E3 ubiquitin-protein ligase activity. In the absence of an external substrate, it can catalyze self-ubiquitination. Acts as a scaffold protein that contributes to the effective activation of the JNK signaling pathway. This chain is E3 ubiquitin-protein ligase SH3RF1 (sh3rf1), found in Xenopus tropicalis (Western clawed frog).